A 764-amino-acid chain; its full sequence is FAST kinase domain-containing protein 5, mitochondrial (764 aa).

The N-terminal 27 residues, 1 to 27, are a transit peptide targeting the mitochondrion; it reads MAATLKSLKLVRYRAFCSPSAFGAVRS. The residue at position 95 (Ser95) is a Phosphoserine. Lys507 carries the post-translational modification N6-acetyllysine. The RAP domain maps to 697–757; that stretch reads LAVQFTNRNQ…RLEKLAFLHE (61 aa).

The protein belongs to the FAST kinase family. As to quaternary structure, found in a complex with GRSF1, DDX28, DHX30 and FASTKD2. Associates with the 12S mitochondrial rRNA (12S mt-rRNA). In terms of tissue distribution, expression detected in spleen, thymus, testis, ovary, colon, heart, smooth muscle, kidney, brain, lung, liver and white adipose tissue with highest expression in heart, smooth muscle, liver and thyroid.

Its subcellular location is the mitochondrion matrix. It is found in the mitochondrion nucleoid. Functionally, plays an important role in the processing of non-canonical mitochondrial mRNA precursors. This chain is FAST kinase domain-containing protein 5, mitochondrial (FASTKD5), found in Homo sapiens (Human).